Reading from the N-terminus, the 404-residue chain is Argininosuccinate synthase (404 aa).

ATP is bound by residues 10 to 18 (AFSGGLDTS) and Ala-37. Positions 88 and 93 each coordinate L-citrulline. Gly-118 serves as a coordination point for ATP. L-aspartate contacts are provided by Thr-120, Asn-124, and Asp-125. An L-citrulline-binding site is contributed by Asn-124. L-citrulline-binding residues include Arg-128, Ser-179, Ser-188, Glu-264, and Tyr-276.

Belongs to the argininosuccinate synthase family. Type 1 subfamily. As to quaternary structure, homotetramer.

The protein resides in the cytoplasm. The catalysed reaction is L-citrulline + L-aspartate + ATP = 2-(N(omega)-L-arginino)succinate + AMP + diphosphate + H(+). Its pathway is amino-acid biosynthesis; L-arginine biosynthesis; L-arginine from L-ornithine and carbamoyl phosphate: step 2/3. This Nitrosomonas eutropha (strain DSM 101675 / C91 / Nm57) protein is Argininosuccinate synthase.